A 506-amino-acid chain; its full sequence is Anaerobic nitric oxide reductase transcription regulator NorR (506 aa).

Aspartate 57 is subject to 4-aspartylphosphate. Residues 187-416 (MIGLSPAMTQ…LEHAIHRAVV (230 aa)) enclose the Sigma-54 factor interaction domain. Residues 215-222 (GETGTGKE) and 278-287 (ADNGTLFLDE) each bind ATP. A DNA-binding region (H-T-H motif) is located at residues 481–500 (WAASARALETDVANLHRLAK).

The protein operates within nitrogen metabolism; nitric oxide reduction. In terms of biological role, required for the expression of anaerobic nitric oxide (NO) reductase, acts as a transcriptional activator for at least the norVW operon. Activation also requires sigma-54. This is Anaerobic nitric oxide reductase transcription regulator NorR from Salmonella gallinarum (strain 287/91 / NCTC 13346).